The following is a 48-amino-acid chain: MTVCEGTRFSVLSRISPARVRVVKERRMRASALSVEEWYGSGDYQKSA.

This is an uncharacterized protein from Treponema pallidum (strain Nichols).